We begin with the raw amino-acid sequence, 247 residues long: 14-3-3 protein zeta (247 aa).

This sequence belongs to the 14-3-3 family. Homodimer.

It localises to the cytoplasm. In terms of biological role, adapter protein implicated in the regulation of a large spectrum of both general and specialized signaling pathways. Binds to a large number of partners, usually by recognition of a phosphoserine or phosphothreonine motif. Binding generally results in the modulation of the activity of the binding partner. The sequence is that of 14-3-3 protein zeta (14-3-3zeta) from Bombyx mori (Silk moth).